Here is a 247-residue protein sequence, read N- to C-terminus: Coiled-coil domain-containing protein 124 homolog (247 aa).

Residues 1–146 are disordered; the sequence is MGGKKFGTNS…TTTTGSDDHE (146 aa). Positions 8 to 85 form a coiled coil; the sequence is TNSKAEEARS…QEDKEIKERY (78 aa). Residues 11 to 114 are compositionally biased toward basic and acidic residues; it reads KAEEARSKKA…EQKQREKELA (104 aa). A compositionally biased stretch (low complexity) spans 122 to 140; that stretch reads VVVVPTTTTTTTTTTTTTT.

Belongs to the CCDC124 family. Associates with translationally inactive ribosomes in the nonrotated state.

In terms of biological role, ribosome-binding protein involved in ribosome hibernation: associates with translationally inactive ribosomes and stabilizes the nonrotated conformation of the 80S ribosome, thereby promoting ribosome preservation and storage. The polypeptide is Coiled-coil domain-containing protein 124 homolog (Dictyostelium discoideum (Social amoeba)).